Reading from the N-terminus, the 287-residue chain is ATP synthase gamma chain (287 aa).

The protein belongs to the ATPase gamma chain family. In terms of assembly, F-type ATPases have 2 components, CF(1) - the catalytic core - and CF(0) - the membrane proton channel. CF(1) has five subunits: alpha(3), beta(3), gamma(1), delta(1), epsilon(1). CF(0) has three main subunits: a, b and c.

It localises to the cell membrane. In terms of biological role, produces ATP from ADP in the presence of a proton gradient across the membrane. The gamma chain is believed to be important in regulating ATPase activity and the flow of protons through the CF(0) complex. The chain is ATP synthase gamma chain from Geobacillus stearothermophilus (Bacillus stearothermophilus).